A 161-amino-acid chain; its full sequence is SsrA-binding protein (161 aa).

The protein belongs to the SmpB family.

It localises to the cytoplasm. Its function is as follows. Required for rescue of stalled ribosomes mediated by trans-translation. Binds to transfer-messenger RNA (tmRNA), required for stable association of tmRNA with ribosomes. tmRNA and SmpB together mimic tRNA shape, replacing the anticodon stem-loop with SmpB. tmRNA is encoded by the ssrA gene; the 2 termini fold to resemble tRNA(Ala) and it encodes a 'tag peptide', a short internal open reading frame. During trans-translation Ala-aminoacylated tmRNA acts like a tRNA, entering the A-site of stalled ribosomes, displacing the stalled mRNA. The ribosome then switches to translate the ORF on the tmRNA; the nascent peptide is terminated with the 'tag peptide' encoded by the tmRNA and targeted for degradation. The ribosome is freed to recommence translation, which seems to be the essential function of trans-translation. In Desulforamulus reducens (strain ATCC BAA-1160 / DSM 100696 / MI-1) (Desulfotomaculum reducens), this protein is SsrA-binding protein.